Here is a 1023-residue protein sequence, read N- to C-terminus: 2-oxoglutarate dehydrogenase complex component E1 (1023 aa).

Residues 1–40 (MFHLRTCAAKLRPLTASQTVKTFSQNRPAAARTFQQIRCY) constitute a mitochondrion transit peptide. K74 bears the N6-succinyllysine mark. S100 carries the post-translational modification Phosphoserine. Residues H143, D156, and D158 each contribute to the Ca(2+) site. R312 serves as a coordination point for thiamine diphosphate. K401 is modified (N6-acetyllysine). D411, N444, and I446 together coordinate thiamine diphosphate. Positions 411, 444, and 446 each coordinate Mg(2+). Residue K534 forms a Glycyl lysine isopeptide (Lys-Gly) (interchain with G-Cter in ubiquitin) linkage. Residue K564 is modified to N6-succinyllysine. Position 676 (Q676) interacts with thiamine diphosphate. Residue K970 is modified to N6-acetyllysine.

The protein belongs to the alpha-ketoglutarate dehydrogenase family. As to quaternary structure, homodimer. The 2-oxoglutarate dehydrogenase complex is composed of OGDH (2-oxoglutarate dehydrogenase; E1), DLST (dihydrolipoamide succinyltransferase; E2), DLD (dihydrolipoamide dehydrogenase; E3) and the assembly factor KGD4. It contains multiple copies of the three enzymatic components (E1, E2 and E3). In the nucleus, the 2-oxoglutarate dehydrogenase complex associates with KAT2A. Interacts with ABHD11; this interaction maintains the functional lipoylation of the 2-oxoglutarate dehydrogenase complex. Thiamine diphosphate serves as cofactor. It depends on Mg(2+) as a cofactor.

It is found in the mitochondrion. It localises to the nucleus. It carries out the reaction N(6)-[(R)-lipoyl]-L-lysyl-[protein] + 2-oxoglutarate + H(+) = N(6)-[(R)-S(8)-succinyldihydrolipoyl]-L-lysyl-[protein] + CO2. Calcium ions and ADP stimulate, whereas ATP and NADH reduce catalytic activity. Its function is as follows. 2-oxoglutarate dehydrogenase (E1o) component of the 2-oxoglutarate dehydrogenase complex (OGDHC). Participates in the first step, rate limiting for the overall conversion of 2-oxoglutarate to succinyl-CoA and CO(2) catalyzed by the whole OGDHC. Catalyzes the irreversible decarboxylation of 2-oxoglutarate (alpha-ketoglutarate) via the thiamine diphosphate (ThDP) cofactor and subsequent transfer of the decarboxylated acyl intermediate on an oxidized dihydrolipoyl group that is covalently amidated to the E2 enzyme (dihydrolipoyllysine-residue succinyltransferase or DLST). Plays a key role in the Krebs (citric acid) cycle, which is a common pathway for oxidation of fuel molecules, including carbohydrates, fatty acids, and amino acids. Can catalyze the decarboxylation of 2-oxoadipate in vitro, but at a much lower rate than 2-oxoglutarate. Mainly active in the mitochondrion. A fraction of the 2-oxoglutarate dehydrogenase complex also localizes in the nucleus and is required for lysine succinylation of histones: associates with KAT2A on chromatin and provides succinyl-CoA to histone succinyltransferase KAT2A. The sequence is that of 2-oxoglutarate dehydrogenase complex component E1 from Pongo abelii (Sumatran orangutan).